A 514-amino-acid polypeptide reads, in one-letter code: UDP-N-acetylmuramate--L-alanine ligase (514 aa).

127–133 (GTHGKTT) is a binding site for ATP. Positions 495-505 (IGGTIPDIPGG) are enriched in low complexity. The segment at 495 to 514 (IGGTIPDIPGGSTPDASAAG) is disordered.

The protein belongs to the MurCDEF family.

It localises to the cytoplasm. The enzyme catalyses UDP-N-acetyl-alpha-D-muramate + L-alanine + ATP = UDP-N-acetyl-alpha-D-muramoyl-L-alanine + ADP + phosphate + H(+). The protein operates within cell wall biogenesis; peptidoglycan biosynthesis. Cell wall formation. In Salinispora tropica (strain ATCC BAA-916 / DSM 44818 / JCM 13857 / NBRC 105044 / CNB-440), this protein is UDP-N-acetylmuramate--L-alanine ligase.